Consider the following 314-residue polypeptide: Ribonuclease Z (314 aa).

Zn(2+) contacts are provided by His62, His64, Asp66, His67, His139, Asp210, and His268. The Proton acceptor role is filled by Asp66.

Belongs to the RNase Z family. As to quaternary structure, homodimer. It depends on Zn(2+) as a cofactor.

The enzyme catalyses Endonucleolytic cleavage of RNA, removing extra 3' nucleotides from tRNA precursor, generating 3' termini of tRNAs. A 3'-hydroxy group is left at the tRNA terminus and a 5'-phosphoryl group is left at the trailer molecule.. Zinc phosphodiesterase, which displays some tRNA 3'-processing endonuclease activity. Probably involved in tRNA maturation, by removing a 3'-trailer from precursor tRNA. This chain is Ribonuclease Z, found in Acaryochloris marina (strain MBIC 11017).